The chain runs to 418 residues: Tyrosine--tRNA ligase (418 aa).

L-tyrosine is bound at residue tyrosine 34. The 'HIGH' region signature appears at 39–48 (PTADSLHLGH). L-tyrosine-binding residues include tyrosine 169 and glutamine 173. The short motif at 229-233 (KFGKS) is the 'KMSKS' region element. Position 232 (lysine 232) interacts with ATP. One can recognise an S4 RNA-binding domain in the interval 352 to 418 (LNIVDMLVTA…GKKKYAVLTY (67 aa)).

It belongs to the class-I aminoacyl-tRNA synthetase family. TyrS type 1 subfamily. In terms of assembly, homodimer.

It is found in the cytoplasm. The catalysed reaction is tRNA(Tyr) + L-tyrosine + ATP = L-tyrosyl-tRNA(Tyr) + AMP + diphosphate + H(+). Functionally, catalyzes the attachment of tyrosine to tRNA(Tyr) in a two-step reaction: tyrosine is first activated by ATP to form Tyr-AMP and then transferred to the acceptor end of tRNA(Tyr). The polypeptide is Tyrosine--tRNA ligase (Streptococcus equi subsp. equi (strain 4047)).